The chain runs to 188 residues: Accessory gene regulator protein B (188 aa).

A run of 4 helical transmembrane segments spans residues 49–69, 82–102, 104–124, and 163–183; these read VALL…YFFV, LLCH…IVHF, VSWT…ICYA, and YMQL…PIFF.

The protein belongs to the AgrB family.

It is found in the cell membrane. In terms of biological role, essential for the production of a quorum sensing system signal molecule, the autoinducing peptide (AIP). This quorum sensing system is responsible for the regulation of the expression of virulence factor genes. Involved in the proteolytic processing of AgrD, the precursor of AIP. The chain is Accessory gene regulator protein B from Staphylococcus lugdunensis.